The chain runs to 305 residues: Probable DNA-invertase y4cG (305 aa).

The Resolvase/invertase-type recombinase catalytic domain maps to 15–148 (RLIGYARVST…SGMQAAKARG (134 aa)). Catalysis depends on Ser23, which acts as the O-(5'-phospho-DNA)-serine intermediate.

The protein belongs to the site-specific recombinase resolvase family.

The protein is Probable DNA-invertase y4cG of Sinorhizobium fredii (strain NBRC 101917 / NGR234).